The sequence spans 196 residues: MASTTSTLSLSWSNSFHSFAGAISEPQKSPENCRVMLPIVAQKKVKKIRKIILKEDIPDLGKKGQLLDVRAGFLRNFLLPLGKAEVVTPLLLKEMKMEDERIEAEKKRVKEEAQQLARMFETVGAFKVKRKGGKGKQIFGSVTAQDLVDIIKAQLQRDVDKKVVFLPDIRETGEYIAELKLHPDVTAQVRVTVFAN.

The N-terminal 41 residues, 1-41 (MASTTSTLSLSWSNSFHSFAGAISEPQKSPENCRVMLPIVA), are a transit peptide targeting the chloroplast.

Component of the chloroplast large ribosomal subunit (LSU). Mature 70S chloroplast ribosomes of higher plants consist of a small (30S) and a large (50S) subunit. The 30S small subunit contains 1 molecule of ribosomal RNA (16S rRNA) and 24 different proteins. The 50S large subunit contains 3 rRNA molecules (23S, 5S and 4.5S rRNA) and 33 different proteins.

Its subcellular location is the plastid. It localises to the chloroplast. In terms of biological role, component of the chloroplast ribosome (chloro-ribosome), a dedicated translation machinery responsible for the synthesis of chloroplast genome-encoded proteins, including proteins of the transcription and translation machinery and components of the photosynthetic apparatus. In Spinacia oleracea (Spinach), this protein is Large ribosomal subunit protein bL9c (RPL9).